The primary structure comprises 154 residues: DNA gyrase inhibitor (154 aa).

Belongs to the DNA gyrase inhibitor family. As to quaternary structure, interacts with DNA gyrase.

The protein localises to the cytoplasm. Functionally, inhibits the supercoiling activity of DNA gyrase. Acts by inhibiting DNA gyrase at an early step, prior to (or at the step of) binding of DNA by the gyrase. It protects cells against toxins that target DNA gyrase, by inhibiting activity of these toxins and reducing the formation of lethal double-strand breaks in the cell. This Pectobacterium carotovorum subsp. carotovorum (strain PC1) protein is DNA gyrase inhibitor.